We begin with the raw amino-acid sequence, 125 residues long: Small ribosomal subunit protein uS11m (125 aa).

Belongs to the universal ribosomal protein uS11 family.

The protein localises to the mitochondrion. The polypeptide is Small ribosomal subunit protein uS11m (RPS11) (Marchantia polymorpha (Common liverwort)).